We begin with the raw amino-acid sequence, 488 residues long: Protein DETOXIFICATION 35 (488 aa).

The next 12 helical transmembrane spans lie at 38–58 (LWMI…VSSV), 73–93 (AVSI…LGMG), 121–141 (IILF…TPVL), 150–170 (IAVP…SLAF), 187–207 (IAWI…LFII), 218–238 (LAFN…VIGW), 262–282 (IASA…IVLT), 296–316 (SICM…NAAI), 336–356 (VYVT…AIII), 379–401 (AYLL…VAVG), 408–428 (VAYI…YLLG), and 439–459 (WSGM…VLYK).

The protein belongs to the multi antimicrobial extrusion (MATE) (TC 2.A.66.1) family. Highly expressed in inflorescence tissues, especially in floral epidermal guard cells including those of the anthers, stigma, siliques and nectaries. Also detected in the meristematic zone of the root apex and in the elongation zone through to the fully expanded cells of the differentiation zone.

It is found in the vacuole membrane. Its function is as follows. Multidrug and toxin efflux transporter involved in flavonoid metabolism. Required for proper reproductive development. The sequence is that of Protein DETOXIFICATION 35 from Arabidopsis thaliana (Mouse-ear cress).